The primary structure comprises 365 residues: Phospho-N-acetylmuramoyl-pentapeptide-transferase (365 aa).

A run of 10 helical transmembrane segments spans residues 22–42, 74–94, 95–115, 134–154, 168–188, 201–221, 240–260, 267–287, 292–312, and 342–362; these read YISVRIIMISITSLLITLALG, TMGGVLILSSVIISCLLWGDL, TSIYLWILILVVIFFGAIGFF, KFALQSIFSIVLAIVLFYLLS, SLYIPMGIVIFVVLAFFIING, GLAIVPVVLVAAGLGIYAYIE, LAEVAVFCAAVCGSGLAFLWF, VFMGDVGSLTLGAVLGVIAVM, LIFFIMGLLFVVEALSVMLQV, and KVVIRFWIISLILFLIGLAAI.

It belongs to the glycosyltransferase 4 family. MraY subfamily. Mg(2+) serves as cofactor.

It is found in the cell inner membrane. The catalysed reaction is UDP-N-acetyl-alpha-D-muramoyl-L-alanyl-gamma-D-glutamyl-meso-2,6-diaminopimeloyl-D-alanyl-D-alanine + di-trans,octa-cis-undecaprenyl phosphate = di-trans,octa-cis-undecaprenyl diphospho-N-acetyl-alpha-D-muramoyl-L-alanyl-D-glutamyl-meso-2,6-diaminopimeloyl-D-alanyl-D-alanine + UMP. The protein operates within cell wall biogenesis; peptidoglycan biosynthesis. Functionally, catalyzes the initial step of the lipid cycle reactions in the biosynthesis of the cell wall peptidoglycan: transfers peptidoglycan precursor phospho-MurNAc-pentapeptide from UDP-MurNAc-pentapeptide onto the lipid carrier undecaprenyl phosphate, yielding undecaprenyl-pyrophosphoryl-MurNAc-pentapeptide, known as lipid I. The sequence is that of Phospho-N-acetylmuramoyl-pentapeptide-transferase from Francisella tularensis subsp. novicida (strain U112).